Here is a 561-residue protein sequence, read N- to C-terminus: Protein NRT1/ PTR FAMILY 5.13 (561 aa).

Residues 78 to 98 (AWSGISTILPLLGAFVADAFL) traverse the membrane as a helical segment. Threonine 103 is modified (phosphothreonine). Helical transmembrane passes span 104-124 (IIIASFIYVLGLAFLTLSAFL), 133-153 (SSPSSFLNALFFFSLYLVAIG), 183-203 (FFNWWYLSMCAGIGLAILVVV), 211-231 (WALGFGIPCVFMVISLVLFVL), 324-344 (IPVWLTTLAYAIPFAQYMTFF), 361-381 (IPPASLQVLISISIVLFVPIY), 405-425 (IGTGMVLATLTMVVAALVESK), 447-467 (IWWLFPQYMLLGLADVHTLVG), 486-506 (AIYLSAMGVGSLLSSLLIYLI), and 530-550 (YFYWLLAVVSAVGFFTFLFIS).

This sequence belongs to the major facilitator superfamily. Proton-dependent oligopeptide transporter (POT/PTR) (TC 2.A.17) family. Expressed in roots, flowers and siliques. Detected in stems and leaves.

The protein localises to the membrane. In Arabidopsis thaliana (Mouse-ear cress), this protein is Protein NRT1/ PTR FAMILY 5.13 (NPF5.13).